The chain runs to 156 residues: Small ribosomal subunit protein uS7 (156 aa).

It belongs to the universal ribosomal protein uS7 family. Part of the 30S ribosomal subunit. Contacts proteins S9 and S11.

Functionally, one of the primary rRNA binding proteins, it binds directly to 16S rRNA where it nucleates assembly of the head domain of the 30S subunit. Is located at the subunit interface close to the decoding center, probably blocks exit of the E-site tRNA. This chain is Small ribosomal subunit protein uS7, found in Trichormus variabilis (strain ATCC 29413 / PCC 7937) (Anabaena variabilis).